The following is a 264-amino-acid chain: Small ribosomal subunit protein eS1 (264 aa).

The interval 232–264 (HGEGGGSGKPSGDETGAKVERADGYEPPVQESV) is disordered. The span at 242-255 (SGDETGAKVERADG) shows a compositional bias: basic and acidic residues.

Belongs to the eukaryotic ribosomal protein eS1 family. As to quaternary structure, component of the small ribosomal subunit. Mature ribosomes consist of a small (40S) and a large (60S) subunit. The 40S subunit contains about 33 different proteins and 1 molecule of RNA (18S). The 60S subunit contains about 49 different proteins and 3 molecules of RNA (28S, 5.8S and 5S). Part of the small subunit (SSU) processome, composed of more than 70 proteins and the RNA chaperone small nucleolar RNA (snoRNA) U3.

Its subcellular location is the cytoplasm. The protein resides in the nucleus. The protein localises to the nucleolus. Functionally, component of the small ribosomal subunit. The ribosome is a large ribonucleoprotein complex responsible for the synthesis of proteins in the cell. Part of the small subunit (SSU) processome, first precursor of the small eukaryotic ribosomal subunit. During the assembly of the SSU processome in the nucleolus, many ribosome biogenesis factors, an RNA chaperone and ribosomal proteins associate with the nascent pre-rRNA and work in concert to generate RNA folding, modifications, rearrangements and cleavage as well as targeted degradation of pre-ribosomal RNA by the RNA exosome. May play a role during erythropoiesis. This chain is Small ribosomal subunit protein eS1, found in Ophiophagus hannah (King cobra).